Consider the following 842-residue polypeptide: Leucine--tRNA ligase (842 aa).

The 'HIGH' region motif lies at proline 44–histidine 55. The short motif at lysine 619–serine 623 is the 'KMSKS' region element. Lysine 622 contributes to the ATP binding site.

It belongs to the class-I aminoacyl-tRNA synthetase family.

The protein localises to the cytoplasm. It carries out the reaction tRNA(Leu) + L-leucine + ATP = L-leucyl-tRNA(Leu) + AMP + diphosphate. The polypeptide is Leucine--tRNA ligase (Borrelia recurrentis (strain A1)).